The primary structure comprises 408 residues: Phosphoglycerate kinase (408 aa).

Substrate-binding positions include 24–26 (DIN), Arg-40, 63–66 (HQGR), Arg-120, and Arg-160. ATP contacts are provided by residues Glu-331 and 357-360 (GGHM).

This sequence belongs to the phosphoglycerate kinase family.

The protein localises to the cytoplasm. The catalysed reaction is (2R)-3-phosphoglycerate + ATP = (2R)-3-phospho-glyceroyl phosphate + ADP. Its pathway is carbohydrate degradation; glycolysis; pyruvate from D-glyceraldehyde 3-phosphate: step 2/5. This is Phosphoglycerate kinase (pgk) from Saccharolobus solfataricus (strain ATCC 35092 / DSM 1617 / JCM 11322 / P2) (Sulfolobus solfataricus).